The chain runs to 88 residues: Large ribosomal subunit protein bL27 (88 aa).

It belongs to the bacterial ribosomal protein bL27 family.

The chain is Large ribosomal subunit protein bL27 from Parabacteroides distasonis (strain ATCC 8503 / DSM 20701 / CIP 104284 / JCM 5825 / NCTC 11152).